Reading from the N-terminus, the 186-residue chain is Alkyl hydroperoxide reductase AhpD (186 aa).

Catalysis depends on Cys-131, which acts as the Proton donor. Cys-131 and Cys-134 are oxidised to a cystine. Cys-134 functions as the Cysteine sulfenic acid (-SOH) intermediate in the catalytic mechanism.

It belongs to the AhpD family.

The enzyme catalyses N(6)-[(R)-dihydrolipoyl]-L-lysyl-[lipoyl-carrier protein] + a hydroperoxide = N(6)-[(R)-lipoyl]-L-lysyl-[lipoyl-carrier protein] + an alcohol + H2O. Functionally, antioxidant protein with alkyl hydroperoxidase activity. Required for the reduction of the AhpC active site cysteine residues and for the regeneration of the AhpC enzyme activity. This Rhodospirillum centenum (strain ATCC 51521 / SW) protein is Alkyl hydroperoxide reductase AhpD.